Reading from the N-terminus, the 179-residue chain is Insulin-like growth factor 2 (179 aa).

The first 24 residues, Met-1 to Ala-24, serve as a signal peptide directing secretion. The b stretch occupies residues Ala-25–Phe-52. 3 disulfides stabilise this stretch: Cys-33/Cys-71, Cys-45/Cys-84, and Cys-70/Cys-75. The segment at Ser-53–Arg-64 is c. The tract at residues Gly-65 to Ala-85 is a. The tract at residues Thr-86–Glu-91 is d. Positions Arg-92–Asp-179 are cleaved as a propeptide — e peptide. A glycan (O-linked (GalNAc...) threonine) is linked at Thr-106. O-linked (GalNAc...) serine glycosylation is present at Ser-154. The tract at residues Ala-160 to Asp-179 is disordered. An O-linked (GalNAc...) threonine glycan is attached at Thr-163.

It belongs to the insulin family. In terms of assembly, interacts with MYORG; this interaction is required for IGF2 secretion. Interacts with integrins ITGAV:ITGB3 and ITGA6:ITGB4; integrin-binding is required for IGF2 signaling. Interacts with IGFBP2. Post-translationally, proteolytically processed by PCSK4, proIGF2 is cleaved at Arg-128 and Arg-92 to generate big-IGF2 and mature IGF2.

It localises to the secreted. Functionally, the insulin-like growth factors possess growth-promoting activity. Major fetal growth hormone in mammals. Plays a key role in regulating fetoplacental development. IGF2 is influenced by placental lactogen. Also involved in tissue differentiation. In adults, involved in glucose metabolism in adipose tissue, skeletal muscle and liver. Acts as a ligand for integrin which is required for IGF2 signaling. Positively regulates myogenic transcription factor MYOD1 function by facilitating the recruitment of transcriptional coactivators, thereby controlling muscle terminal differentiation. Inhibits myoblast differentiation and modulates metabolism via increasing the mitochondrial respiration rate. Its function is as follows. Preptin undergoes glucose-mediated co-secretion with insulin, and acts as a physiological amplifier of glucose-mediated insulin secretion. Exhibits osteogenic properties by increasing osteoblast mitogenic activity through phosphoactivation of MAPK1 and MAPK3. In Bos taurus (Bovine), this protein is Insulin-like growth factor 2.